The chain runs to 475 residues: uncharacterized protein (475 aa).

The stretch at 185–244 (EISVSAISEQLASLMERVDKLEKMNAALEEENKQLKKEREATIKSVKKEAKKIKQEKPQI) forms a coiled coil.

This is an uncharacterized protein from Nora virus.